The following is a 787-amino-acid chain: Signal transducer and activator of transcription 5B (787 aa).

Tyrosine 90 carries the phosphotyrosine modification. Serine 128 and serine 193 each carry phosphoserine. Residues 232-321 (KHQKTLQLLR…MLAEVNATIT (90 aa)) are required for interaction with NMI. The SH2 domain maps to 589 to 686 (WNDGAILGFV…EVYSKYYTPV (98 aa)). At tyrosine 682 the chain carries Phosphotyrosine. Tyrosine 699 is modified (phosphotyrosine; by HCK, JAK and PTK6).

This sequence belongs to the transcription factor STAT family. Upon activation, forms homodimers. Forms also heterodimers with related family members. Binds NR3C1. Interacts with NCOA1. Interacts with NMI. Interacts with SOCS7. Interacts (via SH2 domain) with INSR. Interacts with CPEB3; this inhibits STAT5B-mediated transcriptional activation. Post-translationally, tyrosine phosphorylated in response to signaling via activated KIT, resulting in translocation to the nucleus. Tyrosine phosphorylated in response to signaling via activated FLT3; wild-type FLT3 results in much weaker phosphorylation than constitutively activated mutant FLT3. Alternatively, can be phosphorylated by JAK2. Phosphorylation at Tyr-699 by PTK6 or HCK leads to an increase of its transcriptional activity.

Its subcellular location is the cytoplasm. The protein resides in the nucleus. Functionally, carries out a dual function: signal transduction and activation of transcription. Mediates cellular responses to the cytokine KITLG/SCF and other growth factors. Binds to the GAS element and activates PRL-induced transcription. Positively regulates hematopoietic/erythroid differentiation. The polypeptide is Signal transducer and activator of transcription 5B (STAT5B) (Homo sapiens (Human)).